A 659-amino-acid polypeptide reads, in one-letter code: Putative cysteine-rich receptor-like protein kinase 39 (659 aa).

Residues methionine 1–alanine 27 form the signal peptide. Gnk2-homologous domains follow at residues valine 28–threonine 134 and proline 142–phenylalanine 253. Residues valine 28–glycine 289 lie on the Extracellular side of the membrane. Asparagine 38, asparagine 64, asparagine 122, asparagine 131, asparagine 157, asparagine 170, asparagine 259, and asparagine 274 each carry an N-linked (GlcNAc...) asparagine glycan. The chain crosses the membrane as a helical span at residues glycine 290 to isoleucine 310. Over lysine 311–arginine 659 the chain is Cytoplasmic. Residues phenylalanine 353–leucine 619 enclose the Protein kinase domain. Residues leucine 359–valine 367 and lysine 381 each bind ATP. The residue at position 426 (tyrosine 426) is a Phosphotyrosine. Aspartate 478 (proton acceptor) is an active-site residue. Serine 482 bears the Phosphoserine mark. Position 518 is a phosphothreonine (threonine 518). Residue tyrosine 526 is modified to Phosphotyrosine.

This sequence belongs to the protein kinase superfamily. Ser/Thr protein kinase family. CRK subfamily.

It is found in the membrane. It carries out the reaction L-seryl-[protein] + ATP = O-phospho-L-seryl-[protein] + ADP + H(+). The catalysed reaction is L-threonyl-[protein] + ATP = O-phospho-L-threonyl-[protein] + ADP + H(+). The sequence is that of Putative cysteine-rich receptor-like protein kinase 39 (CRK39) from Arabidopsis thaliana (Mouse-ear cress).